An 89-amino-acid chain; its full sequence is Small ribosomal subunit protein uS14A (89 aa).

It belongs to the universal ribosomal protein uS14 family. As to quaternary structure, part of the 30S ribosomal subunit. Contacts proteins S3 and S10.

In terms of biological role, binds 16S rRNA, required for the assembly of 30S particles and may also be responsible for determining the conformation of the 16S rRNA at the A site. The chain is Small ribosomal subunit protein uS14A from Streptococcus equi subsp. zooepidemicus (strain MGCS10565).